A 761-amino-acid chain; its full sequence is Elongation factor G, mitochondrial (761 aa).

The transit peptide at 1–42 directs the protein to the mitochondrion; it reads MSVQKMMRVPRKMVGGRIPFFTCSKVFSGFSRRSFHESPLAR. A tr-type G domain is found at 68-349; it reads NKLRNIGISA…AIVDYLPNPS (282 aa). GTP contacts are provided by residues 77–84, 148–152, and 202–205; these read AHIDSGKT, DTPGH, and NKMD.

The protein belongs to the TRAFAC class translation factor GTPase superfamily. Classic translation factor GTPase family. EF-G/EF-2 subfamily. The precursor is processed in two steps involving mitochondrial intermediate peptidase (MIP) and mitochondrial processing peptidase (MPP).

The protein resides in the mitochondrion. Its pathway is protein biosynthesis; polypeptide chain elongation. Functionally, mitochondrial GTPase that catalyzes the GTP-dependent ribosomal translocation step during translation elongation. During this step, the ribosome changes from the pre-translocational (PRE) to the post-translocational (POST) state as the newly formed A-site-bound peptidyl-tRNA and P-site-bound deacylated tRNA move to the P and E sites, respectively. Catalyzes the coordinated movement of the two tRNA molecules, the mRNA and conformational changes in the ribosome. This Saccharomyces cerevisiae (strain YJM789) (Baker's yeast) protein is Elongation factor G, mitochondrial.